Reading from the N-terminus, the 297-residue chain is Cell division protein FtsQ (297 aa).

The Cytoplasmic portion of the chain corresponds to 1 to 33; that stretch reads MRPLSFRRRTAQARPDPAPSRLSYRVQRLLLTP. Residues 34–54 traverse the membrane as a helical segment; it reads LFHALIRVGLPAFVLAFGVGW. Topologically, residues 55–297 are periplasmic; the sequence is LLQNQELRDE…IRGLTNDRIE (243 aa). Residues 82–150 enclose the POTRA domain; sequence FMVNAMSVSG…GILAIEIVER (69 aa).

Belongs to the FtsQ/DivIB family. FtsQ subfamily.

Its subcellular location is the cell inner membrane. Functionally, essential cell division protein. This chain is Cell division protein FtsQ, found in Dinoroseobacter shibae (strain DSM 16493 / NCIMB 14021 / DFL 12).